Here is a 205-residue protein sequence, read N- to C-terminus: Ras-related protein RABD1 (205 aa).

Position 2 is an N-acetylserine (Ser-2). GTP-binding positions include 15-23, 33-40, 63-67, 121-124, and 151-153; these read GDSSVGKSC, YIDSYIST, DTAGQ, NKND, and SAK. An Effector region motif is present at residues 37 to 45; sequence YISTIGVDF. Composition is skewed to polar residues over residues 174–186 and 194–205; these read GSQT…SGPG and PIQQNNGGCCGQ. The interval 174–205 is disordered; it reads GSQTNANKTSGPGTVQMKGQPIQQNNGGCCGQ. S-geranylgeranyl cysteine attachment occurs at residues Cys-202 and Cys-203.

Belongs to the small GTPase superfamily. Rab family. Does not interact with GC5. Interacts with XI-2/MYA2.

It localises to the golgi apparatus. It is found in the trans-Golgi network membrane. Its subcellular location is the golgi apparatus membrane. In terms of biological role, protein transport. Regulator of membrane traffic from the Golgi apparatus towards the endoplasmic reticulum (ER). The protein is Ras-related protein RABD1 (RABD1) of Arabidopsis thaliana (Mouse-ear cress).